Reading from the N-terminus, the 204-residue chain is Urease accessory protein UreG (204 aa).

Position 10 to 17 (glycine 10 to threonine 17) interacts with GTP.

The protein belongs to the SIMIBI class G3E GTPase family. UreG subfamily. In terms of assembly, homodimer. UreD, UreF and UreG form a complex that acts as a GTP-hydrolysis-dependent molecular chaperone, activating the urease apoprotein by helping to assemble the nickel containing metallocenter of UreC. The UreE protein probably delivers the nickel.

The protein localises to the cytoplasm. Functionally, facilitates the functional incorporation of the urease nickel metallocenter. This process requires GTP hydrolysis, probably effectuated by UreG. The sequence is that of Urease accessory protein UreG from Bacillus sp. (strain TB-90).